The chain runs to 204 residues: Imidazole glycerol phosphate synthase subunit HisH 1 (204 aa).

The region spanning 5–204 (KVVIIDTGCA…AKLIQNFLEL (200 aa)) is the Glutamine amidotransferase type-1 domain. Cys-80 (nucleophile) is an active-site residue. Catalysis depends on residues His-186 and Glu-188.

Heterodimer of HisH and HisF.

The protein resides in the cytoplasm. The catalysed reaction is 5-[(5-phospho-1-deoxy-D-ribulos-1-ylimino)methylamino]-1-(5-phospho-beta-D-ribosyl)imidazole-4-carboxamide + L-glutamine = D-erythro-1-(imidazol-4-yl)glycerol 3-phosphate + 5-amino-1-(5-phospho-beta-D-ribosyl)imidazole-4-carboxamide + L-glutamate + H(+). It carries out the reaction L-glutamine + H2O = L-glutamate + NH4(+). The protein operates within amino-acid biosynthesis; L-histidine biosynthesis; L-histidine from 5-phospho-alpha-D-ribose 1-diphosphate: step 5/9. In terms of biological role, IGPS catalyzes the conversion of PRFAR and glutamine to IGP, AICAR and glutamate. The HisH subunit provides the glutamine amidotransferase activity that produces the ammonia necessary to HisF for the synthesis of IGP and AICAR. The polypeptide is Imidazole glycerol phosphate synthase subunit HisH 1 (hisH1) (Vibrio vulnificus (strain YJ016)).